Here is a 326-residue protein sequence, read N- to C-terminus: Vitamin B12 import system permease protein BtuC (326 aa).

A run of 9 helical transmembrane segments spans residues 15–35, 61–81, 88–108, 112–132, 146–166, 184–204, 240–260, 274–294, and 302–322; these read WLLC…CAGE, LAVL…QALF, PGLL…VLLG, LPNW…TLIL, LLAG…AIYF, GGVD…LLWI, GWMV…GLVI, VLLP…DIVA, and ELPI…WLLL.

This sequence belongs to the binding-protein-dependent transport system permease family. FecCD subfamily. As to quaternary structure, the complex is composed of two ATP-binding proteins (BtuD), two transmembrane proteins (BtuC) and a solute-binding protein (BtuF).

The protein localises to the cell inner membrane. Its function is as follows. Part of the ABC transporter complex BtuCDF involved in vitamin B12 import. Involved in the translocation of the substrate across the membrane. The sequence is that of Vitamin B12 import system permease protein BtuC from Shigella boydii serotype 18 (strain CDC 3083-94 / BS512).